A 741-amino-acid chain; its full sequence is DNA ligase (741 aa).

NAD(+) is bound by residues 78–82 (DADYD), 127–128 (SL), and glutamate 161. Residue lysine 163 is the N6-AMP-lysine intermediate of the active site. NAD(+) contacts are provided by arginine 184, glutamate 219, lysine 335, and lysine 359. Residues cysteine 464, cysteine 467, cysteine 482, and cysteine 488 each contribute to the Zn(2+) site. A BRCT domain is found at 662 to 741 (VGDSPVAGKT…DAWRVLAGLA (80 aa)).

The protein belongs to the NAD-dependent DNA ligase family. LigA subfamily. Requires Mg(2+) as cofactor. Mn(2+) is required as a cofactor.

The enzyme catalyses NAD(+) + (deoxyribonucleotide)n-3'-hydroxyl + 5'-phospho-(deoxyribonucleotide)m = (deoxyribonucleotide)n+m + AMP + beta-nicotinamide D-nucleotide.. DNA ligase that catalyzes the formation of phosphodiester linkages between 5'-phosphoryl and 3'-hydroxyl groups in double-stranded DNA using NAD as a coenzyme and as the energy source for the reaction. It is essential for DNA replication and repair of damaged DNA. The polypeptide is DNA ligase (Dinoroseobacter shibae (strain DSM 16493 / NCIMB 14021 / DFL 12)).